The sequence spans 168 residues: Ribosome maturation factor RimM (168 aa).

A PRC barrel domain is found at 96–168 (EGDYYWTDLI…IIVVEWDADF (73 aa)).

Belongs to the RimM family. In terms of assembly, binds ribosomal protein uS19.

The protein localises to the cytoplasm. In terms of biological role, an accessory protein needed during the final step in the assembly of 30S ribosomal subunit, possibly for assembly of the head region. Essential for efficient processing of 16S rRNA. May be needed both before and after RbfA during the maturation of 16S rRNA. It has affinity for free ribosomal 30S subunits but not for 70S ribosomes. The chain is Ribosome maturation factor RimM from Coxiella burnetii (strain RSA 331 / Henzerling II).